The chain runs to 141 residues: Cystatin (141 aa).

A signal peptide spans 1-26 (MVHSQLPVAAPLRLLCALLLLPSATM). Residues 29 to 129 (GGLYPRSVTD…CHFQVWSRPW (101 aa)) enclose the Cystatin domain. Positions 73-77 (QVVTG) match the Secondary area of contact motif. Intrachain disulfides connect C91–C107 and C120–C140.

This sequence belongs to the cystatin family. Expressed by the venom gland at an extremely low level (at protein level).

The protein resides in the secreted. Functionally, inhibits various C1 cysteine proteases including cathepsin L, papain and cathepsin B. This protein has no toxic activity and its function in the venom is unknown. It may play a role as a housekeeping or regulatory protein. This Tropidechis carinatus (Australian rough-scaled snake) protein is Cystatin.